The sequence spans 182 residues: UPF0397 protein SPG_0438 (182 aa).

A run of 5 helical transmembrane segments spans residues 10-30 (VVAV…NIPT), 46-66 (LLSI…GHAI), 73-93 (YGLW…VGLF), 109-129 (ILIF…VLAP), and 148-168 (IVAG…LLLA).

The protein belongs to the UPF0397 family.

It localises to the cell membrane. The chain is UPF0397 protein SPG_0438 from Streptococcus pneumoniae serotype 19F (strain G54).